The sequence spans 391 residues: Lipid-A-disaccharide synthase (391 aa).

This sequence belongs to the LpxB family.

It catalyses the reaction a lipid X + a UDP-2-N,3-O-bis[(3R)-3-hydroxyacyl]-alpha-D-glucosamine = a lipid A disaccharide + UDP + H(+). It functions in the pathway bacterial outer membrane biogenesis; LPS lipid A biosynthesis. In terms of biological role, condensation of UDP-2,3-diacylglucosamine and 2,3-diacylglucosamine-1-phosphate to form lipid A disaccharide, a precursor of lipid A, a phosphorylated glycolipid that anchors the lipopolysaccharide to the outer membrane of the cell. The polypeptide is Lipid-A-disaccharide synthase (Azoarcus sp. (strain BH72)).